A 269-amino-acid chain; its full sequence is Formamidopyrimidine-DNA glycosylase (269 aa).

Pro2 serves as the catalytic Schiff-base intermediate with DNA. Residue Glu3 is the Proton donor of the active site. The active-site Proton donor; for beta-elimination activity is the Lys57. DNA-binding residues include His90, Arg109, and Lys150. An FPG-type zinc finger spans residues 235–269 (QVYGRAGELCRRCGNVIEIAKHGQRSTFFCRHCQH). Catalysis depends on Arg259, which acts as the Proton donor; for delta-elimination activity.

This sequence belongs to the FPG family. As to quaternary structure, monomer. Zn(2+) is required as a cofactor.

The catalysed reaction is Hydrolysis of DNA containing ring-opened 7-methylguanine residues, releasing 2,6-diamino-4-hydroxy-5-(N-methyl)formamidopyrimidine.. The enzyme catalyses 2'-deoxyribonucleotide-(2'-deoxyribose 5'-phosphate)-2'-deoxyribonucleotide-DNA = a 3'-end 2'-deoxyribonucleotide-(2,3-dehydro-2,3-deoxyribose 5'-phosphate)-DNA + a 5'-end 5'-phospho-2'-deoxyribonucleoside-DNA + H(+). In terms of biological role, involved in base excision repair of DNA damaged by oxidation or by mutagenic agents. Acts as a DNA glycosylase that recognizes and removes damaged bases. Has a preference for oxidized purines, such as 7,8-dihydro-8-oxoguanine (8-oxoG). Has AP (apurinic/apyrimidinic) lyase activity and introduces nicks in the DNA strand. Cleaves the DNA backbone by beta-delta elimination to generate a single-strand break at the site of the removed base with both 3'- and 5'-phosphates. This is Formamidopyrimidine-DNA glycosylase from Yersinia enterocolitica serotype O:8 / biotype 1B (strain NCTC 13174 / 8081).